The following is a 648-amino-acid chain: DNA mismatch repair protein MutL (648 aa).

The segment at 385 to 430 is disordered; sequence STVKGPAVNEPLTENTLNQQKVKTSASTPVVHTGNSVEPKPETSTA. The span at 396–430 shows a compositional bias: polar residues; the sequence is LTENTLNQQKVKTSASTPVVHTGNSVEPKPETSTA.

Belongs to the DNA mismatch repair MutL/HexB family.

This protein is involved in the repair of mismatches in DNA. It is required for dam-dependent methyl-directed DNA mismatch repair. May act as a 'molecular matchmaker', a protein that promotes the formation of a stable complex between two or more DNA-binding proteins in an ATP-dependent manner without itself being part of a final effector complex. In Agathobacter rectalis (strain ATCC 33656 / DSM 3377 / JCM 17463 / KCTC 5835 / VPI 0990) (Eubacterium rectale), this protein is DNA mismatch repair protein MutL.